Consider the following 178-residue polypeptide: ATP synthase subunit delta (178 aa).

Belongs to the ATPase delta chain family. In terms of assembly, F-type ATPases have 2 components, F(1) - the catalytic core - and F(0) - the membrane proton channel. F(1) has five subunits: alpha(3), beta(3), gamma(1), delta(1), epsilon(1). F(0) has three main subunits: a(1), b(2) and c(10-14). The alpha and beta chains form an alternating ring which encloses part of the gamma chain. F(1) is attached to F(0) by a central stalk formed by the gamma and epsilon chains, while a peripheral stalk is formed by the delta and b chains.

The protein resides in the cell membrane. In terms of biological role, f(1)F(0) ATP synthase produces ATP from ADP in the presence of a proton or sodium gradient. F-type ATPases consist of two structural domains, F(1) containing the extramembraneous catalytic core and F(0) containing the membrane proton channel, linked together by a central stalk and a peripheral stalk. During catalysis, ATP synthesis in the catalytic domain of F(1) is coupled via a rotary mechanism of the central stalk subunits to proton translocation. Its function is as follows. This protein is part of the stalk that links CF(0) to CF(1). It either transmits conformational changes from CF(0) to CF(1) or is implicated in proton conduction. The sequence is that of ATP synthase subunit delta from Streptococcus pyogenes serotype M49 (strain NZ131).